The sequence spans 448 residues: Zinc finger and BTB domain-containing protein 44 (448 aa).

A BTB domain is found at 31–98 (CDITIRVQDK…AYTATLSINT (68 aa)). Residues 289 to 298 (LSDEEVHEEV) are compositionally biased toward basic and acidic residues. Residues 289 to 320 (LSDEEVHEEVSQPVSASQSSMSDQQTVPGSEQ) form a disordered region. Positions 299–313 (SQPVSASQSSMSDQQ) are enriched in low complexity. C2H2-type zinc fingers lie at residues 394–416 (FQCP…MLIH) and 422–444 (FQCD…RLKH).

It is found in the nucleus. This is Zinc finger and BTB domain-containing protein 44 (zbtb44) from Xenopus tropicalis (Western clawed frog).